Consider the following 376-residue polypeptide: Fructose-1,6-bisphosphate aldolase/phosphatase (376 aa).

The active-site Proton acceptor; for FBP phosphatase activity is Asp11. 4 residues coordinate Mg(2+): Asp11, His18, Asp49, and Asp50. Residue His18 participates in beta-D-fructose 1,6-bisphosphate binding. His18 contributes to the dihydroxyacetone phosphate binding site. Tyr87 lines the beta-D-fructose 1,6-bisphosphate pocket. Position 91 (Gln91) interacts with Mg(2+). A beta-D-fructose 1,6-bisphosphate-binding site is contributed by 100-101 (GN). Asp128 lines the Mg(2+) pocket. Position 129 (Lys129) interacts with beta-D-fructose 1,6-bisphosphate. Dihydroxyacetone phosphate is bound at residue Lys129. Residue Tyr224 is the Proton donor/acceptor; for FBP aldolase activity of the active site. Residues Lys227, Asp228, and Asp229 each contribute to the Mg(2+) site. Lys227 functions as the Schiff-base intermediate with DHAP; for FBP aldolase activity in the catalytic mechanism. Residues 237 to 238 (QK), Arg261, and Tyr342 contribute to the beta-D-fructose 1,6-bisphosphate site. Arg261 is a binding site for dihydroxyacetone phosphate. The tract at residues 357–376 (MVPLKDSGPAGTGRAYEDPD) is disordered.

It belongs to the FBP aldolase/phosphatase family. Homooctamer; dimer of tetramers. Requires Mg(2+) as cofactor.

It carries out the reaction beta-D-fructose 1,6-bisphosphate + H2O = beta-D-fructose 6-phosphate + phosphate. It catalyses the reaction beta-D-fructose 1,6-bisphosphate = D-glyceraldehyde 3-phosphate + dihydroxyacetone phosphate. Its pathway is carbohydrate biosynthesis; gluconeogenesis. Its function is as follows. Catalyzes two subsequent steps in gluconeogenesis: the aldol condensation of dihydroxyacetone phosphate (DHAP) and glyceraldehyde-3-phosphate (GA3P) to fructose-1,6-bisphosphate (FBP), and the dephosphorylation of FBP to fructose-6-phosphate (F6P). This is Fructose-1,6-bisphosphate aldolase/phosphatase from Cenarchaeum symbiosum (strain A).